The sequence spans 473 residues: Argininosuccinate lyase (473 aa).

2-(N(omega)-L-arginino)succinate is bound by residues Ser34, Asn121, and Thr166. The active-site Proton acceptor is the His167. Ser289 (proton donor) is an active-site residue. 2-(N(omega)-L-arginino)succinate contacts are provided by Asn297, Tyr329, and Gln334.

Belongs to the lyase 1 family. Argininosuccinate lyase subfamily.

It carries out the reaction 2-(N(omega)-L-arginino)succinate = fumarate + L-arginine. It functions in the pathway amino-acid biosynthesis; L-arginine biosynthesis; L-arginine from L-ornithine and carbamoyl phosphate: step 3/3. This chain is Argininosuccinate lyase (ARG7), found in Chlamydomonas reinhardtii (Chlamydomonas smithii).